The primary structure comprises 426 residues: MSKSENLYAQAQQLIPGGVNSPVRAFTGVGGIPLFIERADGAYLFDVDGKAYIDYVGSWGPMILGHNHPAIRQAVIEAVERGLSFGAPTEMEVKMAQLVTDLVPTMDMVRMVNSGTEATMSAIRLARGYTGRDKIIKFEGCYHGHADCLLVKAGSGALTLGQPNSPGVPADFAKHTLTCTYNDLASVRQAFEQYPQEVACIIVEPVAGNMNCIPPLPEFLPGLRALCDEFGALLIIDEVMTGFRVALAGAQDYYHVIPDLTCLGKIIGGGMPVGAFGGRREVMNALAPTGPVYQAGTLSGNPIAMAAGFACLTEISQVGVYETLTELTDSLATGLRHAAKEENIPLVVNHVGGMFGLFFTNADTVTCYQDVMNCDVERFKRFFHLMLEEGVYLAPSAFEAGFMSLAHSNEDIQKTVNAARRCFAKL.

Lysine 265 bears the N6-(pyridoxal phosphate)lysine mark.

It belongs to the class-III pyridoxal-phosphate-dependent aminotransferase family. HemL subfamily. As to quaternary structure, homodimer. Requires pyridoxal 5'-phosphate as cofactor.

It is found in the cytoplasm. The enzyme catalyses (S)-4-amino-5-oxopentanoate = 5-aminolevulinate. It participates in porphyrin-containing compound metabolism; protoporphyrin-IX biosynthesis; 5-aminolevulinate from L-glutamyl-tRNA(Glu): step 2/2. This chain is Glutamate-1-semialdehyde 2,1-aminomutase, found in Yersinia pseudotuberculosis serotype O:1b (strain IP 31758).